A 71-amino-acid chain; its full sequence is Translation initiation factor IF-1 (71 aa).

Positions 1-71 (MAKQSAIEQD…LSKARITYRY (71 aa)) constitute an S1-like domain.

Belongs to the IF-1 family. In terms of assembly, component of the 30S ribosomal translation pre-initiation complex which assembles on the 30S ribosome in the order IF-2 and IF-3, IF-1 and N-formylmethionyl-tRNA(fMet); mRNA recruitment can occur at any time during PIC assembly.

The protein resides in the cytoplasm. In terms of biological role, one of the essential components for the initiation of protein synthesis. Stabilizes the binding of IF-2 and IF-3 on the 30S subunit to which N-formylmethionyl-tRNA(fMet) subsequently binds. Helps modulate mRNA selection, yielding the 30S pre-initiation complex (PIC). Upon addition of the 50S ribosomal subunit IF-1, IF-2 and IF-3 are released leaving the mature 70S translation initiation complex. This Flavobacterium johnsoniae (strain ATCC 17061 / DSM 2064 / JCM 8514 / BCRC 14874 / CCUG 350202 / NBRC 14942 / NCIMB 11054 / UW101) (Cytophaga johnsonae) protein is Translation initiation factor IF-1.